The sequence spans 354 residues: Decorin (354 aa).

The first 16 residues, 1–16 (MKATLVLFLLAQVSWA), serve as a signal peptide directing secretion. Positions 17-30 (GPFEQRGLFDFMLE) are excised as a propeptide. O-linked (Xyl...) (glycosaminoglycan) serine glycosylation occurs at serine 34. 2 disulfide bridges follow: cysteine 49-cysteine 55 and cysteine 53-cysteine 62. LRR repeat units lie at residues 68–88 (DKVP…NNKI), 89–112 (TEIK…NNKI), 113–136 (SKIS…KNHL), 137–157 (KELP…DNEI), 158–181 (TKLK…GNPL), 182–207 (KNSG…DTNI), 208–228 (TAIP…GNKI), 229–252 (AKVD…FNSI), 253–276 (TVVE…NNKL), 277–299 (LRVP…NNNI), 300–329 (SEVG…SNPV), and 330–354 (RYWQ…GNYK). Asparagine 206 carries an N-linked (GlcNAc...) asparagine glycan. N-linked (GlcNAc...) asparagine glycans are attached at residues asparagine 241, asparagine 257, and asparagine 298. Cysteines 308 and 341 form a disulfide.

It belongs to the small leucine-rich proteoglycan (SLRP) family. SLRP class I subfamily. Binds to type I and type II collagen, fibronectin and TGF-beta. Forms a ternary complex with MFAP2 and ELN. Interacts with DPT. Post-translationally, the attached glycosaminoglycan chain can be either chondroitin sulfate or dermatan sulfate depending upon the tissue of origin.

It localises to the secreted. Its subcellular location is the extracellular space. The protein localises to the extracellular matrix. In terms of biological role, may affect the rate of fibrils formation. May be implicated in the dilatation of the rat cervix. This chain is Decorin (Dcn), found in Rattus norvegicus (Rat).